Consider the following 199-residue polypeptide: GTP cyclohydrolase-2 (199 aa).

R49 to E53 lines the GTP pocket. Residues C54, C65, and C67 each coordinate Zn(2+). GTP contacts are provided by residues Q70, E92–R94, and T114. The Proton acceptor role is filled by D126. The Nucleophile role is filled by R128. GTP contacts are provided by T149 and K154.

Belongs to the GTP cyclohydrolase II family. In terms of assembly, homodimer. It depends on Zn(2+) as a cofactor.

The catalysed reaction is GTP + 4 H2O = 2,5-diamino-6-hydroxy-4-(5-phosphoribosylamino)-pyrimidine + formate + 2 phosphate + 3 H(+). It functions in the pathway cofactor biosynthesis; riboflavin biosynthesis; 5-amino-6-(D-ribitylamino)uracil from GTP: step 1/4. In terms of biological role, catalyzes the conversion of GTP to 2,5-diamino-6-ribosylamino-4(3H)-pyrimidinone 5'-phosphate (DARP), formate and pyrophosphate. The sequence is that of GTP cyclohydrolase-2 from Blochmanniella pennsylvanica (strain BPEN).